The sequence spans 138 residues: Small ribosomal subunit protein uS11c (138 aa).

The interval M1–R24 is disordered. Residues G9 to R24 are compositionally biased toward basic residues.

The protein belongs to the universal ribosomal protein uS11 family. Part of the 30S ribosomal subunit.

It is found in the plastid. The protein resides in the chloroplast. In Panax ginseng (Korean ginseng), this protein is Small ribosomal subunit protein uS11c.